The primary structure comprises 250 residues: Galectin-3 (250 aa).

A disordered region spans residues 1-60; the sequence is MADNFSLHDALSGSGNPNPQGWPGAWGNQPAGAGGYPGASYPGAYPGQAPPGAYPGQAPP. Alanine 2 is subject to N-acetylalanine. Phosphoserine is present on residues serine 6 and serine 12. A run of 3 repeats spans residues 36–44, 45–53, and 54–62. The 8 X 9 AA tandem repeats of Y-P-G-X(3)-P-G-A stretch occupies residues 36 to 109; sequence YPGASYPGAY…AYPATGPYGA (74 aa). Positions 38-47 are enriched in low complexity; sequence GASYPGAYPG. Residues 48–60 show a composition bias toward pro residues; sequence QAPPGAYPGQAPP. The stretch at 63–69 is one 4; approximate repeat; it reads YPGAPGA. Repeat 5 spans residues 70–78; that stretch reads YPGAPAPGV. One copy of the 6; approximate repeat lies at 79–88; the sequence is YPGPPSGPGA. One copy of the 7; approximate repeat lies at 89 to 100; that stretch reads YPSSGQPSATGA. The 8; approximate repeat unit spans residues 101–109; sequence YPATGPYGA. Residues 118–248 form the Galectin domain; it reads YNLPLPGGVV…DIDLTSASYT (131 aa). 181 to 187 is an a beta-D-galactoside binding site; sequence WGREERQ. A Phosphoserine modification is found at serine 188. The Nuclear export signal motif lies at 226-241; the sequence is KKLNEISKLGISGDID.

In terms of assembly, probably forms homo- or heterodimers. Interacts with DMBT1. Interacts with CD6 and ALCAM. Forms a complex with the ITGA3, ITGB1 and CSPG4. Interacts with LGALS3BP, LYPD3, ZFTRAF1 and UACA. Interacts with TRIM16; this interaction mediates autophagy of damage endomembranes. Interacts with cargo receptor TMED10; the interaction mediates the translocation from the cytoplasm into the ERGIC (endoplasmic reticulum-Golgi intermediate compartment) and thereby secretion. As to expression, a major expression is found in the colonic epithelium. It is also abundant in the activated macrophages. Expressed in fetal membranes.

It is found in the cytoplasm. It localises to the nucleus. Its subcellular location is the secreted. Functionally, galactose-specific lectin which binds IgE. May mediate with the alpha-3, beta-1 integrin the stimulation by CSPG4 of endothelial cells migration. Together with DMBT1, required for terminal differentiation of columnar epithelial cells during early embryogenesis. In the nucleus: acts as a pre-mRNA splicing factor. Involved in acute inflammatory responses including neutrophil activation and adhesion, chemoattraction of monocytes macrophages, opsonization of apoptotic neutrophils, and activation of mast cells. Together with TRIM16, coordinates the recognition of membrane damage with mobilization of the core autophagy regulators ATG16L1 and BECN1 in response to damaged endomembranes. The sequence is that of Galectin-3 from Homo sapiens (Human).